The primary structure comprises 500 residues: Betaine aldehyde dehydrogenase, chloroplastic (500 aa).

Residues 1 to 7 (MSMPIPS) constitute a chloroplast transit peptide. An NAD(+)-binding site is contributed by 238-243 (GSSATG). Glu-260 (proton acceptor) is an active-site residue. The active-site Nucleophile is the Cys-294.

This sequence belongs to the aldehyde dehydrogenase family. As to quaternary structure, homodimer.

It is found in the plastid. Its subcellular location is the chloroplast. The enzyme catalyses betaine aldehyde + NAD(+) + H2O = glycine betaine + NADH + 2 H(+). Its pathway is amine and polyamine biosynthesis; betaine biosynthesis via choline pathway; betaine from betaine aldehyde: step 1/1. The sequence is that of Betaine aldehyde dehydrogenase, chloroplastic from Beta vulgaris (Sugar beet).